The primary structure comprises 1333 residues: DNA-directed RNA polymerase subunit beta' (1333 aa).

The Zn(2+) site is built by C60, C62, C75, and C78. Residues D535, D537, and D539 each contribute to the Mg(2+) site. Zn(2+)-binding residues include C901, C983, C990, and C993.

This sequence belongs to the RNA polymerase beta' chain family. In terms of assembly, the RNAP catalytic core consists of 2 alpha, 1 beta, 1 beta' and 1 omega subunit. When a sigma factor is associated with the core the holoenzyme is formed, which can initiate transcription. Requires Mg(2+) as cofactor. The cofactor is Zn(2+).

It carries out the reaction RNA(n) + a ribonucleoside 5'-triphosphate = RNA(n+1) + diphosphate. Functionally, DNA-dependent RNA polymerase catalyzes the transcription of DNA into RNA using the four ribonucleoside triphosphates as substrates. In Corynebacterium glutamicum (strain R), this protein is DNA-directed RNA polymerase subunit beta'.